The primary structure comprises 378 residues: Protein-glutamate methylesterase/protein-glutamine glutaminase 2 (378 aa).

The Response regulatory domain maps to K4–L121. D55 is subject to 4-aspartylphosphate. Residues A141–A188 form a disordered region. A compositionally biased stretch (pro residues) spans A145 to A155. 2 stretches are compositionally biased toward low complexity: residues A156–A168 and R178–A188. The region spanning P187–V378 is the CheB-type methylesterase domain. Catalysis depends on residues S202, H229, and D322.

This sequence belongs to the CheB family. Post-translationally, phosphorylated by CheA. Phosphorylation of the N-terminal regulatory domain activates the methylesterase activity.

Its subcellular location is the cytoplasm. The catalysed reaction is [protein]-L-glutamate 5-O-methyl ester + H2O = L-glutamyl-[protein] + methanol + H(+). It catalyses the reaction L-glutaminyl-[protein] + H2O = L-glutamyl-[protein] + NH4(+). Functionally, involved in chemotaxis. Part of a chemotaxis signal transduction system that modulates chemotaxis in response to various stimuli. Catalyzes the demethylation of specific methylglutamate residues introduced into the chemoreceptors (methyl-accepting chemotaxis proteins or MCP) by CheR. Also mediates the irreversible deamidation of specific glutamine residues to glutamic acid. The chain is Protein-glutamate methylesterase/protein-glutamine glutaminase 2 from Pseudomonas fluorescens (strain Pf0-1).